The chain runs to 287 residues: Beta-lactamase GES-5 (287 aa).

A signal peptide spans 1–18 (MRFIHALLLAGIAHSAYA). The cysteines at positions 63 and 233 are disulfide-linked. The active-site Nucleophile; acyl-ester intermediate is the S64. The imipenem site is built by S64, S125, N127, T230, T232, and R238.

This sequence belongs to the class-A beta-lactamase family.

It is found in the secreted. It catalyses the reaction a beta-lactam + H2O = a substituted beta-amino acid. Its activity is regulated as follows. Inhibited by the beta-lactamase-blocking agents clavulanic acid, sulbactam and tazobactam, via a covalent binding to Ser-64. In terms of biological role, confers resistance to penicillins, cephalosporins and carbapenems. Has carbapenem-hydrolyzing activity. The chain is Beta-lactamase GES-5 from Klebsiella pneumoniae.